A 254-amino-acid polypeptide reads, in one-letter code: Alcohol dehydrogenase (254 aa).

Residue 10–33 (FVAGLGGIGLDTSRELVKRDLKNL) coordinates NAD(+). Ser138 contacts substrate. Tyr151 serves as the catalytic Proton acceptor.

Belongs to the short-chain dehydrogenases/reductases (SDR) family. In terms of assembly, homodimer.

The enzyme catalyses a primary alcohol + NAD(+) = an aldehyde + NADH + H(+). It carries out the reaction a secondary alcohol + NAD(+) = a ketone + NADH + H(+). The chain is Alcohol dehydrogenase (Adh) from Drosophila subobscura (Fruit fly).